The chain runs to 102 residues: NADH-quinone oxidoreductase subunit K 2 (102 aa).

The next 3 helical transmembrane spans lie at 6–26, 30–50, and 66–86; these read LEAFLTVSMILFGLGLIGIIA, LVTVLMSLELALNAVNIALVG, and FIIALAATEAAVGLGIIIAIF.

This sequence belongs to the complex I subunit 4L family. As to quaternary structure, NDH-1 is composed of 14 different subunits. Subunits NuoA, H, J, K, L, M, N constitute the membrane sector of the complex.

It localises to the cell inner membrane. It carries out the reaction a quinone + NADH + 5 H(+)(in) = a quinol + NAD(+) + 4 H(+)(out). NDH-1 shuttles electrons from NADH, via FMN and iron-sulfur (Fe-S) centers, to quinones in the respiratory chain. The immediate electron acceptor for the enzyme in this species is believed to be ubiquinone. Couples the redox reaction to proton translocation (for every two electrons transferred, four hydrogen ions are translocated across the cytoplasmic membrane), and thus conserves the redox energy in a proton gradient. The protein is NADH-quinone oxidoreductase subunit K 2 of Aquifex aeolicus (strain VF5).